A 604-amino-acid polypeptide reads, in one-letter code: Prostaglandin G/H synthase 2 (604 aa).

Positions 1 to 17 (MLARAGLLCASLSPPHA) are cleaved as a signal peptide. One can recognise an EGF-like domain in the interval 18 to 55 (ANPCCSNPCQNQGVCMSIGFDQYMCDCSRTGFYGENCS). Cystine bridges form between Cys-21–Cys-32, Cys-22–Cys-145, Cys-26–Cys-42, and Cys-44–Cys-54. N-linked (GlcNAc...) asparagine glycosylation is present at Asn-53. Position 106 (Arg-106) interacts with substrate. A glycan (N-linked (GlcNAc...) asparagine) is linked at Asn-130. The active-site Proton acceptor is the His-193. Position 341 (Tyr-341) interacts with substrate. Tyr-371 (for cyclooxygenase activity) is an active-site residue. His-374 is a heme b binding site. Asn-396 is a glycosylation site (N-linked (GlcNAc...) asparagine). Position 526 is an S-nitrosocysteine (Cys-526). Cys-555 and Cys-561 form a disulfide bridge. Residue Asn-580 is glycosylated (N-linked (GlcNAc...) asparagine).

This sequence belongs to the prostaglandin G/H synthase family. As to quaternary structure, homodimer. Heme b is required as a cofactor. S-nitrosylation by NOS2 (iNOS) activates enzyme activity. S-nitrosylation may take place on different Cys residues in addition to Cys-526.

The protein localises to the microsome membrane. The protein resides in the endoplasmic reticulum membrane. Its subcellular location is the nucleus inner membrane. It is found in the nucleus outer membrane. The catalysed reaction is (5Z,8Z,11Z,14Z)-eicosatetraenoate + AH2 + 2 O2 = prostaglandin H2 + A + H2O. The enzyme catalyses (5Z,8Z,11Z,14Z)-eicosatetraenoate + 2 O2 = prostaglandin G2. It catalyses the reaction prostaglandin G2 + AH2 = prostaglandin H2 + A + H2O. It carries out the reaction (5Z,8Z,11Z,14Z,17Z)-eicosapentaenoate + 2 O2 = prostaglandin G3. The catalysed reaction is prostaglandin G3 + AH2 = prostaglandin H3 + A + H2O. The enzyme catalyses (8Z,11Z,14Z)-eicosatrienoate + 2 O2 = prostaglandin G1. It catalyses the reaction prostaglandin G1 + AH2 = prostaglandin H1 + A + H2O. It carries out the reaction 2-(5Z,8Z,11Z,14Z)-eicosatetraenoyl-sn-glycero-3-phosphoethanolamine + 2 O2 = 2-(prostaglandin G2)-sn-glycero-3-phosphoethanolamine. The catalysed reaction is 2-(prostaglandin G2)-sn-glycero-3-phosphoethanolamine + AH2 = 2-(prostaglandin H2)-sn-glycero-3-phosphoethanolamine + A + H2O. The enzyme catalyses 2-(5Z,8Z,11Z,14Z)-eicosatetraenoyl-sn-glycero-3-phosphocholine + 2 O2 = 2-(prostaglandin G2)-sn-glycero-3-phosphocholine. It catalyses the reaction 2-(prostaglandin G2)-sn-glycero-3-phosphocholine + AH2 = 2-(prostaglandin H2)-sn-glycero-3-phosphocholine + A + H2O. It carries out the reaction (15S)-hydroperoxy-(5Z,8Z,11Z,13E)-eicosatetraenoate + AH2 = (15S)-hydroxy-(5Z,8Z,11Z,13E)-eicosatetraenoate + A + H2O. The catalysed reaction is 2-(5Z,8Z,11Z,14Z)-eicosatetraenoyl-sn-glycero-3-phosphocholine + AH2 + O2 = 2-[(15S)-hydroxy-(5Z,8Z,11Z,13E)-eicosatetraenoyl]-sn-glycero-3-phosphocholine + A + H2O. The enzyme catalyses 2-(5Z,8Z,11Z,14Z)-eicosatetraenoyl-sn-glycero-3-phosphocholine + AH2 + O2 = 2-[(15R)-hydroxy-(5Z,8Z,11Z,13E)-eicosatetraenoyl]-sn-glycero-3-phosphocholine + A + H2O. It catalyses the reaction 2-(5Z,8Z,11Z,14Z)-eicosatetraenoyl-sn-glycero-3-phosphocholine + AH2 + O2 = 2-[(11R)-hydroxy-(5Z,8Z,12E,14Z)-eicosatetraenoyl]-sn-glycero-3-phosphocholine + A + H2O. It carries out the reaction (9Z,12Z)-octadecadienoate + AH2 + O2 = 9-hydroxy-(10E,12Z)-octadecadienoate + A + H2O. The catalysed reaction is (9Z,12Z)-octadecadienoate + AH2 + O2 = 13-hydroxy-(9Z,11E)-octadecadienoate + A + H2O. The enzyme catalyses (5Z,8Z,11Z,14Z)-eicosatetraenoate + AH2 + O2 = (15R)-hydroxy-(5Z,8Z,11Z,13E)-eicosatetraenoate + A + H2O. It catalyses the reaction (5Z,8Z,11Z,14Z)-eicosatetraenoate + AH2 + O2 = (11R)-hydroxy-(5Z,8Z,12E,14Z)-eicosatetraenoate + A + H2O. It carries out the reaction (5Z,8Z,11Z,14Z,17Z)-eicosapentaenoate + AH2 + O2 = (11R)-hydroxy-(5Z,8Z,12E,14Z,17Z)-eicosapentaenoate + A + H2O. The catalysed reaction is (5Z,8Z,11Z,14Z,17Z)-eicosapentaenoate + AH2 + O2 = (18S)-hydroxy-(5Z,8Z,11Z,14Z,16E)-eicosapentaenoate + A + H2O. The enzyme catalyses (5Z,8Z,11Z,14Z,17Z)-eicosapentaenoate + AH2 + O2 = (18R)-hydroxy-(5Z,8Z,11Z,14Z,16E)-eicosapentaenoate + A + H2O. It catalyses the reaction (5Z,8Z,11Z,14Z,17Z)-eicosapentaenoate + AH2 + O2 = (15R)-hydroxy-(5Z,8Z,11Z,13E,17Z)-eicosapentaenoate + A + H2O. It carries out the reaction (5Z,8Z,11Z,14Z,17Z)-eicosapentaenoate + AH2 + O2 = (15S)-hydroxy-(5Z,8Z,11Z,13E,17Z)-eicosapentaenoate + A + H2O. The catalysed reaction is (7Z,10Z,13Z,16Z,19Z)-docosapentaenoate + AH2 + O2 = 13R-hydroxy-(7Z,10Z,14E,16Z,19Z)-docosapentaenoate + A + H2O. The enzyme catalyses (4Z,7Z,10Z,13Z,16Z,19Z)-docosahexaenoate + AH2 + O2 = 13-hydroxy-(4Z,7Z,10Z,14E,16Z,19Z)-docosahexaenoate + A + H2O. It catalyses the reaction (5S)-hydroxy-(6E,8Z,11Z,14Z)-eicosatetraenoate + AH2 + O2 = (5S,15R)-dihydroxy-(6E,8Z,11Z,13E)-eicosatetraenoate + A + H2O. It carries out the reaction (4Z,7Z,10Z,13Z,16Z,19Z)-docosahexaenoate + AH2 + O2 = 17R-hydroxy-(4Z,7Z,10Z,13Z,15E,19Z)-docosahexaenoate + A + H2O. The catalysed reaction is (5S)-hydroxy-(6E,8Z,11Z,14Z)-eicosatetraenoate + AH2 + O2 = (5S,15S)-dihydroxy-(6E,8Z,11Z,13E)-eicosatetraenoate + A + H2O. The enzyme catalyses (5S)-hydroxy-(6E,8Z,11Z,14Z)-eicosatetraenoate + AH2 + O2 = (5S,11R)-dihydroxy-(6E,8Z,12E,14Z)-eicosatetraenoate + A + H2O. It catalyses the reaction 2-(5Z,8Z,11Z,14Z-eicosatetraenoyl)-glycerol + 2 O2 = 2-glyceryl-prostaglandin G2. It carries out the reaction 2-glyceryl-prostaglandin G2 + AH2 = 2-glyceryl-prostaglandin H2 + A + H2O. The catalysed reaction is (5Z,8Z,11Z,14Z)-eicosatetraenoate + O2 = (15R)-hydroperoxy-(5Z,8Z,11Z,13E)-eicosatetraenoate. The enzyme catalyses (5Z,8Z,11Z,14Z)-eicosatetraenoate + O2 = 11R-hydroperoxy-(5Z,8Z,12E,14Z)-eicosatetraenoate. It catalyses the reaction (9Z,12Z)-octadecadienoate + AH2 + O2 = (9R)-hydroxy-(10E,12Z)-octadecadienoate + A + H2O. It carries out the reaction (9Z,12Z)-octadecadienoate + AH2 + O2 = (9S)-hydroxy-(10E,12Z)-octadecadienoate + A + H2O. The catalysed reaction is (9Z,12Z)-octadecadienoate + AH2 + O2 = (13S)-hydroxy-(9Z,11E)-octadecadienoate + A + H2O. The enzyme catalyses (9Z,12Z)-octadecadienoate + AH2 + O2 = (13R)-hydroxy-(9Z,11E)-octadecadienoate + A + H2O. It participates in lipid metabolism; prostaglandin biosynthesis. Its function is as follows. Dual cyclooxygenase and peroxidase in the biosynthesis pathway of prostanoids, a class of C20 oxylipins mainly derived from arachidonate ((5Z,8Z,11Z,14Z)-eicosatetraenoate, AA, C20:4(n-6)), with a particular role in the inflammatory response. The cyclooxygenase activity oxygenates AA to the hydroperoxy endoperoxide prostaglandin G2 (PGG2), and the peroxidase activity reduces PGG2 to the hydroxy endoperoxide prostaglandin H2 (PGH2), the precursor of all 2-series prostaglandins and thromboxanes. This complex transformation is initiated by abstraction of hydrogen at carbon 13 (with S-stereochemistry), followed by insertion of molecular O2 to form the endoperoxide bridge between carbon 9 and 11 that defines prostaglandins. The insertion of a second molecule of O2 (bis-oxygenase activity) yields a hydroperoxy group in PGG2 that is then reduced to PGH2 by two electrons. Similarly catalyzes successive cyclooxygenation and peroxidation of dihomo-gamma-linoleate (DGLA, C20:3(n-6)) and eicosapentaenoate (EPA, C20:5(n-3)) to corresponding PGH1 and PGH3, the precursors of 1- and 3-series prostaglandins. In an alternative pathway of prostanoid biosynthesis, converts 2-arachidonoyl lysophopholipids to prostanoid lysophopholipids, which are then hydrolyzed by intracellular phospholipases to release free prostanoids. Metabolizes 2-arachidonoyl glycerol yielding the glyceryl ester of PGH2, a process that can contribute to pain response. Generates lipid mediators from n-3 and n-6 polyunsaturated fatty acids (PUFAs) via a lipoxygenase-type mechanism. Oxygenates PUFAs to hydroperoxy compounds and then reduces them to corresponding alcohols. Plays a role in the generation of resolution phase interaction products (resolvins) during both sterile and infectious inflammation. Metabolizes docosahexaenoate (DHA, C22:6(n-3)) to 17R-HDHA, a precursor of the D-series resolvins (RvDs). As a component of the biosynthetic pathway of E-series resolvins (RvEs), converts eicosapentaenoate (EPA, C20:5(n-3)) primarily to 18S-HEPE that is further metabolized by ALOX5 and LTA4H to generate 18S-RvE1 and 18S-RvE2. In vascular endothelial cells, converts docosapentaenoate (DPA, C22:5(n-3)) to 13R-HDPA, a precursor for 13-series resolvins (RvTs) shown to activate macrophage phagocytosis during bacterial infection. In activated leukocytes, contributes to oxygenation of hydroxyeicosatetraenoates (HETE) to diHETES (5,15-diHETE and 5,11-diHETE). Can also use linoleate (LA, (9Z,12Z)-octadecadienoate, C18:2(n-6)) as substrate and produce hydroxyoctadecadienoates (HODEs) in a regio- and stereospecific manner, being (9R)-HODE ((9R)-hydroxy-(10E,12Z)-octadecadienoate) and (13S)-HODE ((13S)-hydroxy-(9Z,11E)-octadecadienoate) its major products. During neuroinflammation, plays a role in neuronal secretion of specialized preresolving mediators (SPMs) 15R-lipoxin A4 that regulates phagocytic microglia. This chain is Prostaglandin G/H synthase 2 (PTGS2), found in Neovison vison (American mink).